A 161-amino-acid polypeptide reads, in one-letter code: Small ribosomal subunit protein uS9 (161 aa).

This sequence belongs to the universal ribosomal protein uS9 family.

The protein is Small ribosomal subunit protein uS9 of Bartonella tribocorum (strain CIP 105476 / IBS 506).